Reading from the N-terminus, the 249-residue chain is Hydroxyacylglutathione hydrolase (249 aa).

Residues His54, His56, Asp58, His59, His113, Asp138, and His176 each contribute to the Zn(2+) site.

It belongs to the metallo-beta-lactamase superfamily. Glyoxalase II family. As to quaternary structure, monomer. It depends on Zn(2+) as a cofactor.

It carries out the reaction an S-(2-hydroxyacyl)glutathione + H2O = a 2-hydroxy carboxylate + glutathione + H(+). It participates in secondary metabolite metabolism; methylglyoxal degradation; (R)-lactate from methylglyoxal: step 2/2. In terms of biological role, thiolesterase that catalyzes the hydrolysis of S-D-lactoyl-glutathione to form glutathione and D-lactic acid. The protein is Hydroxyacylglutathione hydrolase of Parasynechococcus marenigrum (strain WH8102).